Here is a 143-residue protein sequence, read N- to C-terminus: MASCSQHLLSAVAIFSVLAGVATATSIYTCYEGMGLPVNPLQGCRFYVASQTCGAVPLLPIEVMKDWCCRELAGISSNCRCEGLRVFIDRAFPPSQSQGAPPQLPPLATECPAEVKRDFARTLALPGQCNLPAIHGGAYCVFP.

Positions 1–24 (MASCSQHLLSAVAIFSVLAGVATA) are cleaved as a signal peptide.

The protein belongs to the protease inhibitor I6 (cereal trypsin/alpha-amylase inhibitor) family. As to expression, endosperm.

The protein localises to the secreted. In terms of biological role, trypsin inhibitor. No alpha-amylase inhibition detected. This is Trypsin inhibitor CMc (ITR2) from Hordeum vulgare (Barley).